The following is a 569-amino-acid chain: ATP-dependent RNA helicase dhh1 (569 aa).

The segment covering 1-16 (MSDQLADQLKATSLSS) has biased composition (polar residues). Positions 1–39 (MSDQLADQLKATSLSSGPEDWKKGLNLPARDTRQQTEDV) are disordered. Residues 45–73 (LDWEDFIHDRDLLMGIFEAGFEKPSPIQE) carry the Q motif motif. Positions 76-246 (IPVALTGRDI…DKNMTSPYEI (171 aa)) constitute a Helicase ATP-binding domain. 89–96 (AKNGTGKT) contributes to the ATP binding site. The DEAD box motif lies at 194 to 197 (DEAD). The Helicase C-terminal domain occupies 256-416 (GITQYYAFVE…PIPQTIDKSL (161 aa)). Residues 436 to 569 (AQQPQQQLQQ…GQPQGPLSAQ (134 aa)) are disordered. Low complexity predominate over residues 437–482 (QQPQQQLQQSQRPQQSQQQQHFSTQTQPSNQLPPQQGNQQLGFNPQ). Positions 495-520 (GDWQGQNGRQNGTGASNNQPRPTNYQ) are enriched in polar residues. Positions 529–542 (SRGGRGRGFQGQGG) are enriched in gly residues. Residues 543–569 (RQNQNYGGQRGPRTQGQGQPQGPLSAQ) are compositionally biased toward low complexity.

Belongs to the DEAD box helicase family. DDX6/DHH1 subfamily.

It localises to the cytoplasm. The protein localises to the P-body. It catalyses the reaction ATP + H2O = ADP + phosphate + H(+). Its function is as follows. ATP-dependent RNA helicase involved in mRNA turnover, and more specifically in mRNA decapping. Is involved in G1/S DNA-damage checkpoint recovery, probably through the regulation of the translational status of a subset of mRNAs. May also have a role in translation and mRNA nuclear export. The protein is ATP-dependent RNA helicase dhh1 (drh-10) of Neurospora crassa (strain ATCC 24698 / 74-OR23-1A / CBS 708.71 / DSM 1257 / FGSC 987).